We begin with the raw amino-acid sequence, 246 residues long: Major prion protein (246 aa).

A signal peptide spans 1–15 (MLVVFVATWSDLGLC). The segment at 16-223 (KKRPKPGGWN…ESQAYYQRGS (208 aa)) is interaction with GRB2, ERI3 and SYN1. The tract at residues 18–100 (RPKPGGWNTG…QWHKPSKPKT (83 aa)) is disordered. 5 repeat units span residues 44 to 52 (PQGGGGWGQ), 53 to 60 (PHGGGWGQ), 61 to 68 (PHGGGWGQ), 69 to 76 (PHGGGWGQ), and 77 to 84 (PHGGGWGQ). Residues 44 to 84 (PQGGGGWGQPHGGGWGQPHGGGWGQPHGGGWGQPHGGGWGQ) form a 5 X 8 AA tandem repeats of P-H-G-G-G-W-G-Q region. Positions 45–88 (QGGGGWGQPHGGGWGQPHGGGWGQPHGGGWGQPHGGGWGQGGGT) are enriched in gly residues. The Cu(2+) site is built by histidine 54, glycine 55, glycine 56, histidine 62, glycine 63, glycine 64, histidine 70, glycine 71, glycine 72, histidine 78, glycine 79, and glycine 80. Over residues 91-100 (QWHKPSKPKT) the composition is skewed to basic residues. Cysteines 172 and 207 form a disulfide. 2 N-linked (GlcNAc...) asparagine glycosylation sites follow: asparagine 174 and asparagine 190. Serine 223 carries the GPI-anchor amidated serine lipid modification. The propeptide at 224-246 (SMVLFSSPPVILLISFLIFLIVG) is removed in mature form.

The protein belongs to the prion family. In terms of assembly, monomer and homodimer. Has a tendency to aggregate into amyloid fibrils containing a cross-beta spine, formed by a steric zipper of superposed beta-strands. Soluble oligomers may represent an intermediate stage on the path to fibril formation. Copper binding may promote oligomerization. Interacts with GRB2, APP, ERI3/PRNPIP and SYN1. Mislocalized cytosolically exposed PrP interacts with MGRN1; this interaction alters MGRN1 subcellular location and causes lysosomal enlargement. Interacts with KIAA1191.

The protein localises to the cell membrane. It localises to the golgi apparatus. Functionally, its primary physiological function is unclear. Has cytoprotective activity against internal or environmental stresses. May play a role in neuronal development and synaptic plasticity. May be required for neuronal myelin sheath maintenance. May play a role in iron uptake and iron homeostasis. Soluble oligomers are toxic to cultured neuroblastoma cells and induce apoptosis (in vitro). Association with GPC1 (via its heparan sulfate chains) targets PRNP to lipid rafts. Also provides Cu(2+) or Zn(2+) for the ascorbate-mediated GPC1 deaminase degradation of its heparan sulfate side chains. This chain is Major prion protein (PRNP), found in Erythrocebus patas (Red guenon).